A 201-amino-acid polypeptide reads, in one-letter code: Ras-related protein Rab-9A (201 aa).

Alanine 2 carries the N-acetylalanine modification. Glycine 17 contributes to the GDP binding site. Residues glycine 17, valine 18, glycine 19, lysine 20, serine 21, serine 22, threonine 34, histidine 38, and threonine 39 each coordinate GTP. GDP contacts are provided by glycine 19, lysine 20, serine 21, and serine 22. Serine 21 lines the Mg(2+) pocket. The Switch 1 motif lies at 31–42 (KFDTQLFHTIGV). Threonine 39 and aspartate 62 together coordinate Mg(2+). A Switch 2 motif is present at residues 64–78 (AGQERFRSLRTPFYR). Positions 65, 124, 125, and 127 each coordinate GTP. Residues asparagine 124, lysine 125, aspartate 127, alanine 155, and lysine 156 each coordinate GDP. Lysine 156 lines the GTP pocket. Position 179 is a phosphoserine (serine 179). Position 187 is a phosphothreonine (threonine 187). S-geranylgeranyl cysteine attachment occurs at residues cysteine 200 and cysteine 201.

This sequence belongs to the small GTPase superfamily. Rab family. As to quaternary structure, interacts (preferentially in its GTP-bound form) with GCC2 (via its GRIP domain). Interacts (GTP-bound form) with SGSM1; the GDP-bound form has much lower affinity for SGSM1. Interacts with SGSM2. The GTP-bound form but not the GDP-bound form interacts with HPS4 and the BLOC-3 complex (heterodimer of HPS1 and HPS4) but does not interact with HPS1 alone. Interacts (GTP-bound form) with NDE1; two RAB9A-GTP molecules lie on the opposite sides of the NDE1 homodimer; the interaction leads to RAB9A-dynein motor tethering. Interacts (GTP-bound form) with NDEL1. The cofactor is Mg(2+).

The protein resides in the cell membrane. Its subcellular location is the endoplasmic reticulum membrane. It localises to the golgi apparatus membrane. The protein localises to the late endosome. It is found in the cytoplasmic vesicle. The protein resides in the phagosome membrane. Its subcellular location is the phagosome. It localises to the cytoplasmic vesicle membrane. The protein localises to the melanosome. The enzyme catalyses GTP + H2O = GDP + phosphate + H(+). Its activity is regulated as follows. Regulated by guanine nucleotide exchange factors (GEFs) which promote the exchange of bound GDP for free GTP. Regulated by GTPase activating proteins (GAPs) which increase the GTP hydrolysis activity. Inhibited by GDP dissociation inhibitors (GDIs). Functionally, the small GTPases Rab are key regulators of intracellular membrane trafficking, from the formation of transport vesicles to their fusion with membranes. Rabs cycle between an inactive GDP-bound form and an active GTP-bound form that is able to recruit to membranes different sets of downstream effectors directly responsible for vesicle formation, movement, tethering and fusion. RAB9A is involved in the transport of proteins between the endosomes and the trans-Golgi network (TGN). Specifically uses NDE1/NDEL1 as an effector to interact with the dynein motor complex in order to control retrograde trafficking of RAB9-associated late endosomes to the TGN. Involved in the recruitment of SGSM2 to melanosomes and is required for the proper trafficking of melanogenic enzymes TYR, TYRP1 and DCT/TYRP2 to melanosomes in melanocytes. This is Ras-related protein Rab-9A (RAB9A) from Canis lupus familiaris (Dog).